The following is a 260-amino-acid chain: Putative ABC transporter substrate-binding lipoprotein YvgL (260 aa).

An N-terminal signal peptide occupies residues 1 to 20 (MFKKYSIFIAALTAFLLVAG). Residue Cys-21 is the site of N-palmitoyl cysteine attachment. Residue Cys-21 is the site of S-diacylglycerol cysteine attachment. Residues Ser-43, Ser-71, Ala-151, Val-178, and Tyr-196 each contribute to the molybdate site.

The protein belongs to the bacterial solute-binding protein ModA family.

Its subcellular location is the cell membrane. In Bacillus subtilis (strain 168), this protein is Putative ABC transporter substrate-binding lipoprotein YvgL (yvgL).